Consider the following 203-residue polypeptide: Guanylate kinase (203 aa).

Positions 5–183 (GVLYILSAPS…AVEELKSVII (179 aa)) constitute a Guanylate kinase-like domain. ATP is bound at residue 12 to 19 (APSGAGKT).

Belongs to the guanylate kinase family.

The protein localises to the cytoplasm. The enzyme catalyses GMP + ATP = GDP + ADP. Its function is as follows. Essential for recycling GMP and indirectly, cGMP. This Geobacter sulfurreducens (strain ATCC 51573 / DSM 12127 / PCA) protein is Guanylate kinase.